The following is a 1076-amino-acid chain: Bifunctional glutamine synthetase adenylyltransferase/adenylyl-removing enzyme (1076 aa).

The adenylyl removase stretch occupies residues 1–521 (MESSIFKPSS…LHLDIYYRPM (521 aa)). Positions 524 to 1076 (VNAQMENDQI…LERNRRRAQR (553 aa)) are adenylyl transferase. The span at 1042–1056 (TATASAATQQPQTAP) shows a compositional bias: low complexity. The segment at 1042-1076 (TATASAATQQPQTAPRPRMHVIAPRLERNRRRAQR) is disordered.

This sequence belongs to the GlnE family. Mg(2+) is required as a cofactor.

The enzyme catalyses [glutamine synthetase]-O(4)-(5'-adenylyl)-L-tyrosine + phosphate = [glutamine synthetase]-L-tyrosine + ADP. It catalyses the reaction [glutamine synthetase]-L-tyrosine + ATP = [glutamine synthetase]-O(4)-(5'-adenylyl)-L-tyrosine + diphosphate. Its function is as follows. Involved in the regulation of glutamine synthetase GlnA, a key enzyme in the process to assimilate ammonia. When cellular nitrogen levels are high, the C-terminal adenylyl transferase (AT) inactivates GlnA by covalent transfer of an adenylyl group from ATP to specific tyrosine residue of GlnA, thus reducing its activity. Conversely, when nitrogen levels are low, the N-terminal adenylyl removase (AR) activates GlnA by removing the adenylyl group by phosphorolysis, increasing its activity. The regulatory region of GlnE binds the signal transduction protein PII (GlnB) which indicates the nitrogen status of the cell. The sequence is that of Bifunctional glutamine synthetase adenylyltransferase/adenylyl-removing enzyme from Bifidobacterium longum (strain DJO10A).